A 475-amino-acid polypeptide reads, in one-letter code: ISWI one complex protein 4 (475 aa).

Ser2 carries the post-translational modification Phosphoserine. Residue Thr9 is modified to Phosphothreonine. 3 disordered regions span residues 42-84 (VSVH…DFGE), 181-296 (EEEY…IKYH), and 454-475 (EMDR…KVGA). Residues Ser65 and Ser73 each carry the phosphoserine modification. Composition is skewed to acidic residues over residues 72–84 (QSEE…DFGE), 181–193 (EEEY…EENE), and 241–252 (ASEEEEEEEEEK). Ser242 is subject to Phosphoserine. Basic residues predominate over residues 259–294 (KRPQRTKTKKVVVSKTKPNPKTKAKKEKPKPPKPIK). The segment covering 456–475 (DREKPSFSEDVKEEESKVGA) has biased composition (basic and acidic residues).

Component of the ISW1B complex, which at least consists of ISW1, IOC2 and IOC4.

It localises to the nucleus. Its function is as follows. Functions as a component of the ISW1B complex, which acts in remodeling the chromatin by catalyzing an ATP-dependent alteration in the structure of nucleosomal DNA. The ISW1B complex acts within coding regions to control the amount of RNA polymerase II released into productive elongation and to coordinate elongation with termination and pre-mRNA processing. The chain is ISWI one complex protein 4 (IOC4) from Saccharomyces cerevisiae (strain ATCC 204508 / S288c) (Baker's yeast).